We begin with the raw amino-acid sequence, 67 residues long: Medusin-PT (67 aa).

Positions 1–22 (MAFLKKSLFLVFFLGFVSLSIC) are cleaved as a signal peptide. A propeptide spanning residues 23–48 (EEEKRETDEKENEQEDDREERSEEKR) is cleaved from the precursor. The interval 25-46 (EKRETDEKENEQEDDREERSEE) is disordered. The segment covering 31-40 (EKENEQEDDR) has biased composition (acidic residues). Leu66 bears the Leucine amide mark.

This sequence belongs to the frog skin active peptide (FSAP) family. Medusin subfamily. In the synthetic mutant medusin-PT1a [T58K], the Leu-50 has been modified in a D-amino acid. In medusin-PT1a, there is an increase in antimicrobial activity, and an increase in hemolytic activity. It is more potent against S.aureus and gains activity against MRSA, E.faecalis, E.coli, P.aeruginosa and C.albicans. There is an important increase in both biofilm inhibition and biofilm eradication. Expressed by the skin glands.

The protein resides in the secreted. Its subcellular location is the target cell membrane. Its function is as follows. Antimicrobial peptide with activity against Gram-positive bacteria S.epidermidis ATCC 12228 (MIC=50 uM) and S.aureus (MIC=64 ug/ml and MBC=128 ug/ml). Not active against some Gram-positive bacteria (methicillin-resistant S.aureus (MRSA), E.faecalis), Gram-negative bacterium E.coli ATCC 25922 and fungus C.albicans at concentrations up to 100 uM. Can only slightly inhibit the formation of biofilm by S.aureus (minimal biofilm inhibitionconcentration MBIC=512 ug/ml, minimal biofilm eradication concentration MBEC&gt;512 ug/ml). Has an anti-inflammatory effect, since it inhibits the production of the pro-inflammatory cytokines TNF-alpha and IL-1beta. Has high activity of stimulation of insulin release, which may protect the species from being eaten by predators by causing fatal hypoglycemia. Is not cytotoxic to cancer line cells. Shows very low hemolysis on horse erythrocytes and moderate hemolysis on mouse erythrocytes. This is Medusin-PT from Phyllomedusa tarsius (Brownbelly leaf frog).